The sequence spans 200 residues: ATP-dependent Clp protease proteolytic subunit (200 aa).

S102 functions as the Nucleophile in the catalytic mechanism. H127 is a catalytic residue.

This sequence belongs to the peptidase S14 family. As to quaternary structure, fourteen ClpP subunits assemble into 2 heptameric rings which stack back to back to give a disk-like structure with a central cavity, resembling the structure of eukaryotic proteasomes.

The protein resides in the cytoplasm. It catalyses the reaction Hydrolysis of proteins to small peptides in the presence of ATP and magnesium. alpha-casein is the usual test substrate. In the absence of ATP, only oligopeptides shorter than five residues are hydrolyzed (such as succinyl-Leu-Tyr-|-NHMec, and Leu-Tyr-Leu-|-Tyr-Trp, in which cleavage of the -Tyr-|-Leu- and -Tyr-|-Trp bonds also occurs).. Cleaves peptides in various proteins in a process that requires ATP hydrolysis. Has a chymotrypsin-like activity. Plays a major role in the degradation of misfolded proteins. In Dehalococcoides mccartyi (strain ATCC BAA-2100 / JCM 16839 / KCTC 5957 / BAV1), this protein is ATP-dependent Clp protease proteolytic subunit.